The primary structure comprises 847 residues: Leucine--tRNA ligase (847 aa).

Positions 39–49 (PYPSGALHMGH) match the 'HIGH' region motif. The 'KMSKS' region signature appears at 613–617 (KMSKS). Position 616 (Lys616) interacts with ATP.

The protein belongs to the class-I aminoacyl-tRNA synthetase family.

It is found in the cytoplasm. The enzyme catalyses tRNA(Leu) + L-leucine + ATP = L-leucyl-tRNA(Leu) + AMP + diphosphate. This Gloeobacter violaceus (strain ATCC 29082 / PCC 7421) protein is Leucine--tRNA ligase.